A 240-amino-acid chain; its full sequence is Cysteine-rich venom protein catrin (240 aa).

An N-terminal signal peptide occupies residues 1–19 (MIAFIVLPILAAVLQQSSG). The 129-residue stretch at 38-166 (VDLHNFLRRS…KYSYFYVCQY (129 aa)) folds into the SCP domain. Disulfide bonds link cysteine 75/cysteine 153, cysteine 92/cysteine 167, cysteine 148/cysteine 164, cysteine 186/cysteine 193, cysteine 189/cysteine 198, cysteine 202/cysteine 235, cysteine 211/cysteine 229, and cysteine 220/cysteine 233. Residues 202-235 (CTKEDKYTNCKSLVQQAGCQDKQMQSDCPAICFC) form the ShKT domain.

Belongs to the CRISP family. Expressed by the venom gland.

The protein resides in the secreted. Its function is as follows. Catrin-2 weakly blocks contraction of smooth muscle elicited by high potassium-induced depolarization, but does not block caffeine-stimulated contraction. Catrin-1 has no significant effect. May target voltage-gated calcium channels on smooth muscle. The sequence is that of Cysteine-rich venom protein catrin from Crotalus atrox (Western diamondback rattlesnake).